The chain runs to 63 residues: UPF0337 protein SERP0494 (63 aa).

The tract at residues 1–46 is disordered; the sequence is MAEDKFEQAKGNIKETVGNATDNKELEKDGKGDKASGKAKEAVENV. Basic and acidic residues predominate over residues 22-46; sequence DNKELEKDGKGDKASGKAKEAVENV.

It belongs to the UPF0337 (CsbD) family.

In Staphylococcus epidermidis (strain ATCC 35984 / DSM 28319 / BCRC 17069 / CCUG 31568 / BM 3577 / RP62A), this protein is UPF0337 protein SERP0494.